A 384-amino-acid polypeptide reads, in one-letter code: S-adenosylmethionine synthase (384 aa).

His-15 contributes to the ATP binding site. Asp-17 contacts Mg(2+). Residue Glu-43 participates in K(+) binding. Residues Glu-56 and Gln-99 each coordinate L-methionine. Residues 99-109 (QSADINQGVDR) are flexible loop. ATP contacts are provided by residues 164 to 166 (DAK), 230 to 231 (RF), Asp-239, 245 to 246 (RK), Ala-262, and Lys-266. Residue Asp-239 coordinates L-methionine. Lys-270 contacts L-methionine.

It belongs to the AdoMet synthase family. In terms of assembly, homotetramer; dimer of dimers. It depends on Mg(2+) as a cofactor. The cofactor is K(+).

It is found in the cytoplasm. The catalysed reaction is L-methionine + ATP + H2O = S-adenosyl-L-methionine + phosphate + diphosphate. It participates in amino-acid biosynthesis; S-adenosyl-L-methionine biosynthesis; S-adenosyl-L-methionine from L-methionine: step 1/1. Catalyzes the formation of S-adenosylmethionine (AdoMet) from methionine and ATP. The overall synthetic reaction is composed of two sequential steps, AdoMet formation and the subsequent tripolyphosphate hydrolysis which occurs prior to release of AdoMet from the enzyme. This chain is S-adenosylmethionine synthase, found in Haemophilus influenzae (strain 86-028NP).